A 242-amino-acid chain; its full sequence is Probable porphobilinogen deaminase (242 aa).

The protein belongs to the HMBS family.

The catalysed reaction is 4 porphobilinogen + H2O = hydroxymethylbilane + 4 NH4(+). The protein operates within porphyrin-containing compound metabolism; protoporphyrin-IX biosynthesis; coproporphyrinogen-III from 5-aminolevulinate: step 2/4. Tetrapolymerization of the monopyrrole PBG into the hydroxymethylbilane pre-uroporphyrinogen in several discrete steps. This Chlamydia muridarum (strain MoPn / Nigg) protein is Probable porphobilinogen deaminase (hemC).